A 497-amino-acid polypeptide reads, in one-letter code: Membrane-bound lytic murein transglycosylase F (497 aa).

A signal peptide spans 1-29 (MFFRPDFRPRCAKWLIATGLFLMLGACVE). Residues 30–267 (KPTTLERVKE…RLKDRYYGHV (238 aa)) form a non-LT domain region. Positions 268–497 (DVLGYVGAYT…PASSPEKPAL (230 aa)) are LT domain. The active site involves E314. The tract at residues 464-497 (VADGNLHVPGVDKTQPPAPTAPVVPASSPEKPAL) is disordered. The segment covering 486–497 (VVPASSPEKPAL) has biased composition (low complexity).

This sequence in the N-terminal section; belongs to the bacterial solute-binding protein 3 family. The protein in the C-terminal section; belongs to the transglycosylase Slt family.

It localises to the cell outer membrane. It carries out the reaction Exolytic cleavage of the (1-&gt;4)-beta-glycosidic linkage between N-acetylmuramic acid (MurNAc) and N-acetylglucosamine (GlcNAc) residues in peptidoglycan, from either the reducing or the non-reducing ends of the peptidoglycan chains, with concomitant formation of a 1,6-anhydrobond in the MurNAc residue.. Murein-degrading enzyme that degrades murein glycan strands and insoluble, high-molecular weight murein sacculi, with the concomitant formation of a 1,6-anhydromuramoyl product. Lytic transglycosylases (LTs) play an integral role in the metabolism of the peptidoglycan (PG) sacculus. Their lytic action creates space within the PG sacculus to allow for its expansion as well as for the insertion of various structures such as secretion systems and flagella. The sequence is that of Membrane-bound lytic murein transglycosylase F from Pseudomonas syringae pv. tomato (strain ATCC BAA-871 / DC3000).